A 100-amino-acid chain; its full sequence is MAKKSMIARDVKRKKLVERYAAKRKSLIDAFKSAKDPMERLEIHRKIQALPRNCAPNRIRNRCWATGKPRGVYRDFGLCRNQLRSRAHNGELPGVVKSSW.

The protein belongs to the universal ribosomal protein uS14 family. In terms of assembly, part of the 30S ribosomal subunit. Contacts proteins S3 and S10.

Functionally, binds 16S rRNA, required for the assembly of 30S particles and may also be responsible for determining the conformation of the 16S rRNA at the A site. The protein is Small ribosomal subunit protein uS14 of Prochlorococcus marinus (strain NATL1A).